A 36-amino-acid polypeptide reads, in one-letter code: Kappa-isophellitoxin-Tst1a (36 aa).

A ShKT domain is found at 2–36 (CENNFSDRECERRKKDCDSSMKFRELSCPKTCGTC). 3 disulfides stabilise this stretch: Cys-2–Cys-36, Cys-11–Cys-29, and Cys-18–Cys-33.

This sequence belongs to the sea anemone type 1 potassium channel toxin family. Type 1a subfamily. As to expression, predominantly expressed in mesenterial filaments (at protein level), a morphological structure that has a functional role in prey killing and digestion. Also expressed in club-tips, tentacles, actinopharynx, body column, mesenterial filaments and pedal disk.

It is found in the secreted. The protein localises to the nematocyst. In terms of biological role, probable toxin with unknown function. Does not inhibit all channels tested. Is not cytotoxic on macrophage. The polypeptide is Kappa-isophellitoxin-Tst1a (Telmatactis stephensoni (Sea anemone)).